Here is a 314-residue protein sequence, read N- to C-terminus: MKITSRKVVVIGTGFVGTSIAYSMINQGLVNELVLIDVNQDKAEGEALDLLDGISWAQENVIVRAGNYKDCENADIVVITAGVNQKPGQSRLDLVNTNAKIMRSIVTQVMDSGFDGIFVIASNPVDILTYVAWETSGLDQSRIVGTGTTLDTTRFRKELATKLEIDPRSVHGYIIGEHGDSEVAVWSHTTIGGKPILEFIVKNKKIGLEDLSNLSNKVKNAAYEIIDKKQATYYGIGMSTARIVKAILNNEQVILPVSAYLRGEYGQEGVFTGVPSVVNQNGVREIIELNIDAYEMKQFEKSVSQLKEVIESIK.

NAD(+) contacts are provided by residues valine 16, aspartate 37, lysine 42, tyrosine 68, and 82–83; that span reads GV. Residues glutamine 85 and arginine 91 each coordinate substrate. NAD(+) contacts are provided by residues serine 104, 121–123, and threonine 146; that span reads ASN. 123–126 contributes to the substrate binding site; it reads NPVD. 151-154 provides a ligand contact to substrate; sequence DTTR. Positions 156 and 171 each coordinate beta-D-fructose 1,6-bisphosphate. Residue histidine 178 is the Proton acceptor of the active site. Phosphotyrosine is present on tyrosine 223. Threonine 232 is a binding site for substrate.

Belongs to the LDH/MDH superfamily. LDH family. Homotetramer.

Its subcellular location is the cytoplasm. It carries out the reaction (S)-lactate + NAD(+) = pyruvate + NADH + H(+). It functions in the pathway fermentation; pyruvate fermentation to lactate; (S)-lactate from pyruvate: step 1/1. With respect to regulation, allosterically activated by fructose 1,6-bisphosphate (FBP). In terms of biological role, catalyzes the conversion of lactate to pyruvate. This chain is L-lactate dehydrogenase, found in Lactococcus lactis subsp. cremoris (strain MG1363).